The sequence spans 208 residues: Thymidylate kinase (208 aa).

10 to 17 contacts ATP; sequence GIDGSGKT.

Belongs to the thymidylate kinase family.

It carries out the reaction dTMP + ATP = dTDP + ADP. Phosphorylation of dTMP to form dTDP in both de novo and salvage pathways of dTTP synthesis. The protein is Thymidylate kinase of Ligilactobacillus salivarius (strain UCC118) (Lactobacillus salivarius).